We begin with the raw amino-acid sequence, 146 residues long: Large ribosomal subunit protein uL15 (146 aa).

The tract at residues methionine 1 to arginine 46 is disordered. A compositionally biased stretch (basic residues) spans lysine 9–glycine 19. The span at arginine 20–serine 30 shows a compositional bias: gly residues.

The protein belongs to the universal ribosomal protein uL15 family. In terms of assembly, part of the 50S ribosomal subunit.

Binds to the 23S rRNA. The polypeptide is Large ribosomal subunit protein uL15 (Phytoplasma mali (strain AT)).